Consider the following 476-residue polypeptide: Cytosolic Fe-S cluster assembly factor narfl (476 aa).

[4Fe-4S] cluster contacts are provided by C24, C71, C74, C77, C190, C246, C395, and C399.

Belongs to the NARF family. Component of the CIA complex.

Its function is as follows. Component of the cytosolic iron-sulfur protein assembly (CIA) complex, a multiprotein complex that mediates the incorporation of iron-sulfur cluster into extramitochondrial Fe/S proteins. This Xenopus tropicalis (Western clawed frog) protein is Cytosolic Fe-S cluster assembly factor narfl (narfl).